A 262-amino-acid polypeptide reads, in one-letter code: Acyl-[acyl-carrier-protein]--UDP-N-acetylglucosamine O-acyltransferase (262 aa).

This sequence belongs to the transferase hexapeptide repeat family. LpxA subfamily. In terms of assembly, homotrimer.

The protein resides in the cytoplasm. The catalysed reaction is a (3R)-hydroxyacyl-[ACP] + UDP-N-acetyl-alpha-D-glucosamine = a UDP-3-O-[(3R)-3-hydroxyacyl]-N-acetyl-alpha-D-glucosamine + holo-[ACP]. It functions in the pathway glycolipid biosynthesis; lipid IV(A) biosynthesis; lipid IV(A) from (3R)-3-hydroxytetradecanoyl-[acyl-carrier-protein] and UDP-N-acetyl-alpha-D-glucosamine: step 1/6. Functionally, involved in the biosynthesis of lipid A, a phosphorylated glycolipid that anchors the lipopolysaccharide to the outer membrane of the cell. This Mannheimia succiniciproducens (strain KCTC 0769BP / MBEL55E) protein is Acyl-[acyl-carrier-protein]--UDP-N-acetylglucosamine O-acyltransferase.